Reading from the N-terminus, the 444-residue chain is N-succinylarginine dihydrolase (444 aa).

Residues 19-28, Asn110, and 137-138 contribute to the substrate site; these read AGLSFGNVAS and HR. The active site involves Glu174. Substrate is bound at residue Arg214. Residue His250 is part of the active site. Substrate is bound by residues Asp252 and Asn362. Cys368 acts as the Nucleophile in catalysis.

It belongs to the succinylarginine dihydrolase family. As to quaternary structure, homodimer.

It carries out the reaction N(2)-succinyl-L-arginine + 2 H2O + 2 H(+) = N(2)-succinyl-L-ornithine + 2 NH4(+) + CO2. It participates in amino-acid degradation; L-arginine degradation via AST pathway; L-glutamate and succinate from L-arginine: step 2/5. Functionally, catalyzes the hydrolysis of N(2)-succinylarginine into N(2)-succinylornithine, ammonia and CO(2). In Shewanella baltica (strain OS185), this protein is N-succinylarginine dihydrolase.